The primary structure comprises 175 residues: ATP synthase subunit d, mitochondrial (175 aa).

Ser-2 carries the post-translational modification N-acetylserine.

F-type ATP synthases have 2 components, the catalytic core F(1) and the membrane-embedded component F(0), linked together by a central stalk and a peripheral stalk. The central stalk, also called rotor shaft, is often seen as part of F(1). The peripheral stalk is seen as part of F(0). F(0) contains the membrane channel next to the rotor. F-type ATP synthases form dimers but each monomer functions independently in ATP generation. The dimer consists of 18 different polypeptides: ATP1 (subunit alpha, part of F(1), 3 molecules per monomer), ATP2 (subunit beta, part of F(1), 3 molecules per monomer), ATP3 (subunit gamma, part of the central stalk), ATP4 (subunit b, part of the peripheral stalk), ATP5/OSCP (subunit 5/OSCP, part of the peripheral stalk), ATP6 (subunit a, part of the peripheral stalk), ATP7 (subunit d, part of the peripheral stalk), ATP8 (subunit 8, part of the peripheral stalk), OLI1 (subunit c, part of the rotor, 10 molecules per monomer), ATP14 (subunit h, part of the peripheral stalk), ATP15 (subunit epsilon, part of the central stalk), ATP16 (subunit delta, part of the central stalk), ATP17 (subunit f, part of the peripheral stalk), ATP18 (subunit i/j, part of the peripheral stalk). Dimer-specific subunits are ATP19 (subunit k, at interface between monomers), ATP20 (subunit g, at interface between monomers), TIM11 (subunit e, at interface between monomers). Also contains subunit L.

It is found in the mitochondrion inner membrane. Functionally, mitochondrial membrane ATP synthase (F(1)F(0) ATP synthase or Complex V) produces ATP from ADP in the presence of a proton gradient across the membrane which is generated by electron transport complexes of the respiratory chain. F-type ATP synthases consist of two structural domains, F(1) - containing the extramembraneous catalytic core, and F(0) - containing the membrane proton channel, linked together by a central stalk and a peripheral stalk. During catalysis, ATP synthesis in the catalytic domain of F(1) is coupled via a rotary mechanism of the central stalk subunits to proton translocation. Part of the complex F(0) domain and the peripheral stalk, which acts as a stator to hold the catalytic alpha/ATP1(3)beta/ATP2(3) subcomplex and subunit a/ATP6 static relative to the rotary elements. This chain is ATP synthase subunit d, mitochondrial, found in Pichia angusta (Yeast).